Reading from the N-terminus, the 361-residue chain is 3,6-anhydro-alpha-L-galactonate cycloisomerase (361 aa).

The Proton acceptor role is filled by K166. The Mg(2+) site is built by D195, E221, and E247. H297 serves as the catalytic Proton donor/acceptor.

It belongs to the mandelate racemase/muconate lactonizing enzyme family. Mg(2+) serves as cofactor.

The catalysed reaction is 3,6-anhydro-L-galactonate = 2-dehydro-3-deoxy-L-galactonate. Its function is as follows. Involved in the degradation of 3,6-anhydro-L-galactose, which is the major monomeric sugar of red macroalgae. Catalyzes the isomerization of 3,6-anhydrogalactonate (AHGA) to 2-keto-3-deoxy-galactonate (KDGal). In Streptomyces coelicolor (strain ATCC BAA-471 / A3(2) / M145), this protein is 3,6-anhydro-alpha-L-galactonate cycloisomerase.